A 208-amino-acid polypeptide reads, in one-letter code: Small ribosomal subunit protein uS4 (208 aa).

The interval 24 to 52 (GVKPFDVKTKKANKAPGQHGQARGGKQSE) is disordered. Residues 98–160 (SRLDNVVYRM…AKQQLRIKNA (63 aa)) form the S4 RNA-binding domain.

Belongs to the universal ribosomal protein uS4 family. As to quaternary structure, part of the 30S ribosomal subunit. Contacts protein S5. The interaction surface between S4 and S5 is involved in control of translational fidelity.

One of the primary rRNA binding proteins, it binds directly to 16S rRNA where it nucleates assembly of the body of the 30S subunit. Its function is as follows. With S5 and S12 plays an important role in translational accuracy. This is Small ribosomal subunit protein uS4 from Acinetobacter baumannii (strain ATCC 17978 / DSM 105126 / CIP 53.77 / LMG 1025 / NCDC KC755 / 5377).